The primary structure comprises 521 residues: UPF0053 protein BU323 (521 aa).

Transmembrane regions (helical) follow at residues 13–33 (LLTLVILEVVLGIDNLIFVAI), 49–69 (IGLGLALVMRLALLSLISWIV), 80–100 (FFSLSIRDIILLFGGFFLLFK), 125–145 (FWAVVIQIVVLDAVFSLDAII), 150–170 (MVNQLLIMMIAVILATFLMLL), 185–205 (VVVLCLSFLLMIGFSLVTEAL), and 207–227 (FCIPKGYLYAAIGFSILIEIF). CBS domains follow at residues 311 to 370 (MTPR…KIDA) and 374 to 434 (SSKI…DADE).

Belongs to the UPF0053 family.

The protein resides in the cell membrane. The polypeptide is UPF0053 protein BU323 (Buchnera aphidicola subsp. Acyrthosiphon pisum (strain APS) (Acyrthosiphon pisum symbiotic bacterium)).